Here is a 324-residue protein sequence, read N- to C-terminus: Hydroxylase/desaturase CTB9 (324 aa).

The segment covering 1-11 has biased composition (polar residues); it reads MTSTITTTETL. Disordered regions lie at residues 1 to 33 and 288 to 308; these read MTST…KELP and TARR…EPRA.

It belongs to the asaB hydroxylase/desaturase family.

It functions in the pathway mycotoxin biosynthesis. Hydroxylase/desaturase; part of the gene cluster that mediates the biosynthesis of cercosporin, a light-activated, non-host-selective toxin. The perylenequinone chromophore of cercosporin absorbs light energy to attain an electronically-activated triplet state and produces active oxygen species such as the hydroxyl radical, superoxide, hydrogen peroxide or singlet oxygen upon reaction with oxygen molecules. These reactive oxygen species cause damage to various cellular components including lipids, proteins and nucleic acids. The first step of cercosporin biosynthesis is performed by the polyketide synthase CTB1 which catalyzes the formation of nor-toralactone. The starter unit acyltransferase (SAT) domain of CTB1 initiates polyketide extension by the selective utilization of acetyl-CoA, which is elongated to the heptaketide in the beta-ketoacyl synthase (KS) domain by successive condensations with six malonyl units introduced by the malonyl acyltransferase (MAT) domain. The product template (PT) domain catalyzes C4-C9 and C2-C11 aldol cyclizations and dehydrations to a trihydroxynaphthalene, which is thought to be delivered to the thioesterase (TE) domain for product release. The bifunctional enzyme CTB3 then methylates nor-toralactone to toralactone before conducting an unusual oxidative aromatic ring opening. The O-methyltransferase CTB2 further methylates the nascent OH-6 of the CBT3 product, blocking further oxidation at this site before the reductase CTB6 reduces the 2-oxopropyl ketone at position C7, giving naphthalene. The FAD-dependent monooxygenase CTB5 in concert with the multicopper oxidase CTB12 are responsible for homodimerization of naphthalene with CTB7 installing the dioxepine moiety, finally producing cercosporin. The fasciclin domain-containing protein CTB11 might act with CTB5 and CTB12 whereas the roles of CTB9 and CTB10 have still to be elucidated. The polypeptide is Hydroxylase/desaturase CTB9 (Cercospora beticola (Sugarbeet leaf spot fungus)).